We begin with the raw amino-acid sequence, 239 residues long: MKTMVAMLLAAVGVAVSASSTLAVNFCQSNKDRNCFTGSFGLVDIPGDASHKLLKADFGYVDLNGVGWQTNKETKTDGASIPPLLQPFVGSPWEDGYIRAAVIHDWYCDRHVRTWKETHRVFYDTMLASGLEKPKAKLLFYAVYAFGPRWGYLVPGEKCAAGKNCIQMTGKDAAFVQLPGELADQSSAGELKAIKATIDLKERSGDALTLDELMAIADEAHPKQTLRDQRPAGGDEITK.

The first 23 residues, 1–23 (MKTMVAMLLAAVGVAVSASSTLA), serve as a signal peptide directing secretion. Residues 220–230 (AHPKQTLRDQR) are compositionally biased toward basic and acidic residues. The disordered stretch occupies residues 220-239 (AHPKQTLRDQRPAGGDEITK).

This is an uncharacterized protein from Sinorhizobium fredii (strain NBRC 101917 / NGR234).